The chain runs to 53 residues: VAHDRKFKNVQPKDXXKVPAIAVANPKEEVIVKNKDEKMADLRNVPKXDVIXK.

As to expression, mainly expressed in the fetal brain where it is specifically localized to the proximal axonal segments, cell bodies and growth cones. Lower level of expression was also detected in the fetal heart and the skeletal muscle. No expression in kidney, liver, lung or spleen.

The protein resides in the membrane. Neuronal antigen that may play a role in brain development. May be involved in neurite formation or axonal guidance. This chain is Neuronal protein NP-190, found in Sus scrofa (Pig).